The chain runs to 85 residues: Large ribosomal subunit protein bL27 (85 aa).

A disordered region spans residues 1–21 (MAHKKGVGSSKNGRESESKRL).

The protein belongs to the bacterial ribosomal protein bL27 family.

The polypeptide is Large ribosomal subunit protein bL27 (Porphyromonas gingivalis (strain ATCC 33277 / DSM 20709 / CIP 103683 / JCM 12257 / NCTC 11834 / 2561)).